The primary structure comprises 312 residues: Aminoacyl tRNA synthase complex-interacting multifunctional protein 1 (312 aa).

M1 is subject to N-acetylmethionine. An N-acetylalanine modification is found at A2. Residues A6 to K46 form a required for fibroblast proliferation region. The interval K54–V194 is interaction with HSP90B1. A required for endothelial cell death region spans residues A101–K114. Residues S107–S147 are disordered. Over residues E111 to Q138 the composition is skewed to basic and acidic residues. The segment at K114–G192 is required for endothelial cell migration. K137 participates in a covalent cross-link: Glycyl lysine isopeptide (Lys-Gly) (interchain with G-Cter in SUMO1). S140 bears the Phosphoserine mark. The tRNA-binding domain maps to D151 to T252. N6-succinyllysine is present on K269.

Homodimer. Part of the multisynthetase complex (MSC), a multisubunit complex that groups tRNA ligases for Arg (RARS1), Asp (DARS1), Gln (QARS1), Ile (IARS1), Leu (LARS1), Lys (KARS1), Met (MARS1) the bifunctional ligase for Glu and Pro (EPRS1) and the auxiliary subunits AIMP1/p43, AIMP2/p38 and EEF1E1/p18. Interacts (via N-terminus) with RARS1 (via N-terminus). Part of a complex composed of RARS1, QARS1 and AIMP1. Interacts (via C-terminus) with SMURF2. Interacts (via N-terminus) with HSP90B1/gp96 (via C-terminus). Interacts with PSMA7. Interacts with TARS3. Post-translationally, cleaved by caspase-7 in response to apoptosis to produce EMAP-II.

It localises to the nucleus. The protein localises to the cytoplasm. The protein resides in the cytosol. It is found in the secreted. Its subcellular location is the endoplasmic reticulum. It localises to the golgi apparatus. Non-catalytic component of the multisynthase complex. Stimulates the catalytic activity of cytoplasmic arginyl-tRNA synthase. Binds tRNA. Possesses inflammatory cytokine activity. Negatively regulates TGF-beta signaling through stabilization of SMURF2 by binding to SMURF2 and inhibiting its SMAD7-mediated degradation. Involved in glucose homeostasis through induction of glucagon secretion at low glucose levels. Promotes dermal fibroblast proliferation and wound repair. Regulates KDELR1-mediated retention of HSP90B1/gp96 in the endoplasmic reticulum. Plays a role in angiogenesis by inducing endothelial cell migration at low concentrations and endothelian cell apoptosis at high concentrations. Induces maturation of dendritic cells and monocyte cell adhesion. Modulates endothelial cell responses by degrading HIF-1A through interaction with PSMA7. In Homo sapiens (Human), this protein is Aminoacyl tRNA synthase complex-interacting multifunctional protein 1 (AIMP1).